A 578-amino-acid chain; its full sequence is Cytochrome P450 monooxygenase fsoE (578 aa).

The helical transmembrane segment at leucine 28 to tryptophan 48 threads the bilayer. Heme is bound at residue cysteine 517.

This sequence belongs to the cytochrome P450 family. The cofactor is heme.

Its subcellular location is the membrane. It carries out the reaction 3-O-(beta-D-glucopyranosyl)-isomotiol + 2 reduced [NADPH--hemoprotein reductase] + 2 O2 = 2-deacetoxyfuscoatroside + 2 oxidized [NADPH--hemoprotein reductase] + 2 H2O + 3 H(+). The enzyme catalyses 3-O-(beta-D-glucopyranosyl)-2alpha-hydroxyisomotiol + 2 reduced [NADPH--hemoprotein reductase] + 2 O2 = 2-deacetylfuscoatroside + 2 oxidized [NADPH--hemoprotein reductase] + 2 H2O + 3 H(+). It catalyses the reaction 3-O-(beta-D-glucopyranosyl)-2alpha-acetoxyisomotiol + 2 reduced [NADPH--hemoprotein reductase] + 2 O2 = fuscoatroside + 2 oxidized [NADPH--hemoprotein reductase] + 2 H2O + 3 H(+). The catalysed reaction is isomotiol + reduced [NADPH--hemoprotein reductase] + O2 = 19beta-hydroxyisomotiol + oxidized [NADPH--hemoprotein reductase] + H2O + H(+). It carries out the reaction 2alpha-hydroxyisomotiol + reduced [NADPH--hemoprotein reductase] + O2 = 2alpha,19beta-dihydroxyisomotiol + oxidized [NADPH--hemoprotein reductase] + H2O + H(+). The enzyme catalyses 2alpha,19beta-dihydroxyisomotiol + reduced [NADPH--hemoprotein reductase] + O2 = 2alpha-hydroxyismotiol-19-one + oxidized [NADPH--hemoprotein reductase] + 2 H2O + H(+). It catalyses the reaction 2alpha-hydroxyismotiol-19-one + 2 reduced [NADPH--hemoprotein reductase] + O2 = 2-deacetyl,3-deglucopyranosyl-fuscoatroside + 2 oxidized [NADPH--hemoprotein reductase] + H2O + 3 H(+). Its pathway is secondary metabolite biosynthesis; terpenoid biosynthesis. Functionally, cytochrome P450 monooxygenase; part of the gene cluster that mediates the biosynthesis of the enfumafungin-type antibiotic, fuscoatroside. Within the pathway, fsoE catalyzes the oxidative cleavage of the c19-C20 bond within the E-ring, resulting in the formation of a carboxyl group and a methyl group. FsoE exhibits preferential substrate selectivity toward glycoside substrates over their aglycones. The fuscoatroside biosynthesis is initiated by the cyclization of 2,3(S)-oxidosqualene through FsoA's terpene cyclase (TC) domain, leading to the formation of the fernane skeleton isomotiol, harboring a fernane triterpene skeleton with a C8-C9 double bond. Subsequently, C2-alpha-hydroxylation mediated by fsoD results in the production of 2-alpha-hydroxy-isomotiol, which is further acetylated by fsoF. The glycosyltransferase (GT) domain of FsoA may convert isomotiol, 2-alpha-hydroxy-isomotiol, and the acetylated derivative of 2-alpha-hydroxy-isomotiol into their corresponding glycosides 3-O-(beta-D-glucopyranosyl)-isomotiol, 3-O-(beta-D-glucopyranosyl)-2-alpha-hydroxy-isomotiol, and 3-O-(beta-D-glucopyranosyl)-2-alpha-acetoxy-isomotiol, which then undergo oxidative cleavage under the action of fsoE to form s 2-deacetoxy-fuscoatroside, 2-deacetyl-fuscoatroside, and fuscoatroside, respectively. Although hydroxylation followed by acetylation of 3-O-(beta-D-glucopyranosyl)-isomotiol and 2-deacetoxy-fuscoatroside by fsoD and fsoF could not be ruled out, this process is likely to occur with difficulty due to bulky steric hindrance caused by the presence of a glycan at C3 in these compounds. Interestingly, fsoE can also utilize the aglycones isomotiol and 2-alpha-hydroxy-isomotiol as substrates to generate 19-beta-hydroxy-isomotiol and 2-alpha,19-beta-dihydroxy-isomotiol, respectively. These reactions occur with lower efficiency. Finally, fsoE can further convert 2-alpha,19-beta-dihydroxy-isomotiol into 2-alpha-hydroxy-ismotiol-19-one and 2-alpha-hydroxy-ismotiol-19-one into 2-deacetyl-3-deglucopyranosyl-fuscoatroside. The protein is Cytochrome P450 monooxygenase fsoE of Humicola fuscoatra.